The chain runs to 320 residues: Ribosomal RNA large subunit methyltransferase F (320 aa).

Residues 1–20 are disordered; it reads MHKSANSKTRKQSKGLHPRN.

The protein belongs to the methyltransferase superfamily. METTL16/RlmF family.

Its subcellular location is the cytoplasm. It catalyses the reaction adenosine(1618) in 23S rRNA + S-adenosyl-L-methionine = N(6)-methyladenosine(1618) in 23S rRNA + S-adenosyl-L-homocysteine + H(+). Its function is as follows. Specifically methylates the adenine in position 1618 of 23S rRNA. This is Ribosomal RNA large subunit methyltransferase F from Saccharophagus degradans (strain 2-40 / ATCC 43961 / DSM 17024).